The following is a 110-amino-acid chain: U1-lycotoxin-Ls1jj (110 aa).

A signal peptide spans 1–20; it reads MKFVLLFGVLLVTLFSYSSA. Residues 21 to 44 constitute a propeptide that is removed on maturation; sequence EMLDDFDQADEDELLSLIEKEEAR. 4 disulfide bridges follow: cysteine 47/cysteine 62, cysteine 54/cysteine 71, cysteine 61/cysteine 89, and cysteine 73/cysteine 87.

It belongs to the neurotoxin 19 (CSTX) family. 03 subfamily. Expressed by the venom gland.

It localises to the secreted. The chain is U1-lycotoxin-Ls1jj from Lycosa singoriensis (Wolf spider).